A 152-amino-acid chain; its full sequence is Xanthine-guanine phosphoribosyltransferase (152 aa).

5-phospho-alpha-D-ribose 1-diphosphate contacts are provided by residues 37–38 (RG), Arg69, and 88–96 (DDLVDTGGT). Residue Arg69 participates in GMP binding. Residue Asp89 participates in Mg(2+) binding. Guanine-binding residues include Asp92 and Ile135. Positions 92 and 135 each coordinate xanthine. GMP contacts are provided by residues 92–96 (DTGGT) and 134–135 (WI).

The protein belongs to the purine/pyrimidine phosphoribosyltransferase family. XGPT subfamily. In terms of assembly, homotetramer. Mg(2+) serves as cofactor.

The protein localises to the cell inner membrane. The catalysed reaction is GMP + diphosphate = guanine + 5-phospho-alpha-D-ribose 1-diphosphate. The enzyme catalyses XMP + diphosphate = xanthine + 5-phospho-alpha-D-ribose 1-diphosphate. It carries out the reaction IMP + diphosphate = hypoxanthine + 5-phospho-alpha-D-ribose 1-diphosphate. The protein operates within purine metabolism; GMP biosynthesis via salvage pathway; GMP from guanine: step 1/1. Its pathway is purine metabolism; XMP biosynthesis via salvage pathway; XMP from xanthine: step 1/1. In terms of biological role, purine salvage pathway enzyme that catalyzes the transfer of the ribosyl-5-phosphate group from 5-phospho-alpha-D-ribose 1-diphosphate (PRPP) to the N9 position of the 6-oxopurines guanine and xanthine to form the corresponding ribonucleotides GMP (guanosine 5'-monophosphate) and XMP (xanthosine 5'-monophosphate), with the release of PPi. To a lesser extent, also acts on hypoxanthine. The chain is Xanthine-guanine phosphoribosyltransferase from Escherichia coli O127:H6 (strain E2348/69 / EPEC).